Here is a 273-residue protein sequence, read N- to C-terminus: Large ribosomal subunit protein uL2 (273 aa).

Disordered stretches follow at residues 32-53 (PLVE…TTRH) and 221-273 (RGTA…RRSK). Residues 39–48 (KSGGRNNNGR) are compositionally biased toward low complexity.

It belongs to the universal ribosomal protein uL2 family. As to quaternary structure, part of the 50S ribosomal subunit. Forms a bridge to the 30S subunit in the 70S ribosome.

In terms of biological role, one of the primary rRNA binding proteins. Required for association of the 30S and 50S subunits to form the 70S ribosome, for tRNA binding and peptide bond formation. It has been suggested to have peptidyltransferase activity; this is somewhat controversial. Makes several contacts with the 16S rRNA in the 70S ribosome. The sequence is that of Large ribosomal subunit protein uL2 from Erwinia tasmaniensis (strain DSM 17950 / CFBP 7177 / CIP 109463 / NCPPB 4357 / Et1/99).